A 122-amino-acid chain; its full sequence is Large ribosomal subunit protein uL14 (122 aa).

The protein belongs to the universal ribosomal protein uL14 family. In terms of assembly, part of the 50S ribosomal subunit. Forms a cluster with proteins L3 and L19. In the 70S ribosome, L14 and L19 interact and together make contacts with the 16S rRNA in bridges B5 and B8.

Its function is as follows. Binds to 23S rRNA. Forms part of two intersubunit bridges in the 70S ribosome. The polypeptide is Large ribosomal subunit protein uL14 (Stenotrophomonas maltophilia (strain R551-3)).